A 634-amino-acid chain; its full sequence is MSLVPATNYIYTPLNQLKGGTIVNVYGVVKFFKPPYLSKGTDYCSVVTIVDQTNVKLTCLLFSGNYEALPIIYKNGDIVRFHRLKIQVYKKETQGITSSGFASLTFEGTLGAPIIPRTSSKYFNFTTEDHKMVEALRVWASTHMSPSWTLLKLCDVQPMQYFDLTCQLLGKAEVDGASFLLKVWDGTRTPFPSWRVLIQDLVLEGDLSHIHRLQNLTIDILVYDNHVHVARSLKVGSFLRIYSLHTKLQSMNSENQTMLSLEFHLHGGTSYGRGIRVLPESNSDVDQLKKDLESANLTANQHSDVICQSEPDDSFPSSGSVSLYEVERCQQLSATILTDHQYLERTPLCAILKQKAPQQYRIRAKLRSYKPRRLFQSVKLHCPKCHLLQEVPHEGDLDIIFQDGATKTPDVKLQNTSLYDSKIWTTKNQKGRKVAVHFVKNNGILPLSNECLLLIEGGTLSEICKLSNKFNSVIPVRSGHEDLELLDLSAPFLIQGTIHHYGCKQCSSLRSIQNLNSLVDKTSWIPSSVAEALGIVPLQYVFVMTFTLDDGTGVLEAYLMDSDKFFQIPASEVLMDDDLQKSVDMIMDMFCPPGIKIDAYPWLECFIKSYNVTNGTDNQICYQIFDTTVAEDVI.

2 DNA-binding regions span residues 33–48 and 270–273; these read KPPY…SVVT and SYGR.

This sequence belongs to the telombin family. As to quaternary structure, homodimer or homooligomer. Component of the shelterin complex (telosome) composed of TERF1, TERF2, TINF2, TERF2IP, ACD and POT1. Binds single-stranded telomeric DNA as a monomer. Associated component of the telomerase holoenzyme complex. Found in a complex with TERF1, TINF2 and TNKS1. Interacts with TNKS1. Forms heterodimers with ACD. Identified in a complex with ACD and single-stranded telomeric DNA. As to expression, ubiquitous.

It localises to the nucleus. It is found in the chromosome. Its subcellular location is the telomere. Its function is as follows. Component of the telomerase ribonucleoprotein (RNP) complex that is essential for the replication of chromosome termini. Is a component of the double-stranded telomeric DNA-binding TRF1 complex which is involved in the regulation of telomere length by cis-inhibition of telomerase. Also acts as a single-stranded telomeric DNA-binding protein and thus may act as a downstream effector of the TRF1 complex and may transduce information about telomere maintenance and/or length to the telomere terminus. Component of the shelterin complex (telosome) that is involved in the regulation of telomere length and protection. Shelterin associates with arrays of double-stranded TTAGGG repeats added by telomerase and protects chromosome ends; without its protective activity, telomeres are no longer hidden from the DNA damage surveillance and chromosome ends are inappropriately processed by DNA repair pathways. Binds to two or more telomeric single-stranded 5'-TTAGGG-3' repeats (G-strand) and with high specificity to a minimal telomeric single-stranded 5'-TAGGGTTAG-3' sequence. Binds telomeric single-stranded sequences internally or at proximity of a 3'-end. Its activity is TERT dependent but it does not increase TERT activity by itself. In contrast, the ACD-POT1 heterodimer enhances telomere elongation by increasing telomerase processivity. The chain is Protection of telomeres protein 1 (POT1) from Homo sapiens (Human).